The sequence spans 441 residues: Cortexillin-2 (441 aa).

Residues 1–229 (MDLNKEWEKV…VLYTSLFFHA (229 aa)) form an actin-binding region. Calponin-homology (CH) domains are found at residues 9–117 (KVQE…RKYR) and 126–231 (KSSE…HAFR). Coiled-coil stretches lie at residues 229-362 (AFRA…RLGL) and 406-430 (SFEEQAKKLASKLESENILIEKYLN).

This sequence belongs to the cortexillin family. As to quaternary structure, homodimer; parallel.

The protein localises to the cytoplasm. Its subcellular location is the cytoskeleton. Its function is as follows. Actin-bundling protein. When linked to F-actin the actin filaments form preferentially anti-parallel bundles that associate into meshworks. Plays a major role in cytokinesis. Negatively regulates cortical localization of rapgap1. In Dictyostelium discoideum (Social amoeba), this protein is Cortexillin-2 (ctxB).